We begin with the raw amino-acid sequence, 373 residues long: PqqA peptide cyclase (373 aa).

A Radical SAM core domain is found at 9–224 (LTKPRWLLAE…QSYKEKVKGR (216 aa)). [4Fe-4S] cluster-binding residues include C23, C27, and C30.

The protein belongs to the radical SAM superfamily. PqqE family. As to quaternary structure, interacts with PqqD. The interaction is necessary for activity of PqqE. [4Fe-4S] cluster is required as a cofactor.

It catalyses the reaction [PQQ precursor protein] + S-adenosyl-L-methionine = E-Y cross-linked-[PQQ precursor protein] + 5'-deoxyadenosine + L-methionine + H(+). It participates in cofactor biosynthesis; pyrroloquinoline quinone biosynthesis. In terms of biological role, catalyzes the cross-linking of a glutamate residue and a tyrosine residue in the PqqA protein as part of the biosynthesis of pyrroloquinoline quinone (PQQ). This is PqqA peptide cyclase from Methylococcus capsulatus (strain ATCC 33009 / NCIMB 11132 / Bath).